A 255-amino-acid polypeptide reads, in one-letter code: Zinc-finger homeodomain protein 6 (255 aa).

Residues 1–35 (MEFRGHDEPVDEMGVAYGRTPPSSSSSPAASASAG) are disordered. Residues 21–35 (PPSSSSSPAASASAG) are compositionally biased toward low complexity. A ZF-HD dimerization-type; degenerate zinc finger spans residues 45-93 (YHECLRNHAAAMGGHVVDGCREFMPMPGDAADALKCAACGCHRSFHRKD). Residues 106-126 (PSPPTPRVPLLMPPPQPQPHP) are compositionally biased toward pro residues. Disordered stretches follow at residues 106 to 181 (PSPP…KFTP) and 226 to 255 (NNKS…QQQQ). Low complexity predominate over residues 139-153 (YHHTPSGSGGTTTES). The segment at residues 172–235 (RKRFRTKFTP…NNKSSIGSSS (64 aa)) is a DNA-binding region (homeobox). Residues 240-255 (RRQPQEQQSQQQQQQQ) are compositionally biased toward low complexity.

As to quaternary structure, homo- and heterodimer with other ZFHD proteins.

The protein localises to the nucleus. In terms of biological role, putative transcription factor. The sequence is that of Zinc-finger homeodomain protein 6 (ZHD6) from Oryza sativa subsp. japonica (Rice).